The sequence spans 156 residues: Large ribosomal subunit protein uL15 (156 aa).

The segment at 1–56 is disordered; it reads MDLSNLKPAEGATQAGQRLGRGEGSGRGGHSSTRGTKGQSSRSGSGTRPIWFEGGQ.

The protein belongs to the universal ribosomal protein uL15 family. As to quaternary structure, part of the 50S ribosomal subunit.

Binds to the 23S rRNA. The sequence is that of Large ribosomal subunit protein uL15 from Salinibacter ruber (strain DSM 13855 / M31).